The sequence spans 1337 residues: GTPase activating protein homolog 3 (1337 aa).

One can recognise an F-BAR domain in the interval 14–264 (PESFADLWDG…LINSINNEDE (251 aa)). 2 disordered regions span residues 279–328 (PKPF…LPIF) and 345–392 (ITNS…RFST). Positions 293–302 (TPPPPPPPQI) are enriched in pro residues. The span at 345 to 358 (ITNSLSLSSDSLQT) shows a compositional bias: polar residues. In terms of domain architecture, Rho-GAP spans 422–611 (CKIEDIMVAQ…NIIEHFKPLQ (190 aa)). 3 disordered regions span residues 612 to 689 (VNDS…TTNT), 733 to 781 (VNNN…HTVA), and 794 to 821 (ITTPQKSIGDGNGLIGQSPSAHLMSPSE). Low complexity-rich tracts occupy residues 621–637 (SSSSSSSTSINQSSIES), 645–687 (SSTN…SSTT), and 734–772 (NNNNQNQNQNQNQNQNQDQNQNQSKQPIQSSNQTQQQVS). The stretch at 830–859 (YLEDQERCKQRIDELHTQVNELYSDITTIE) forms a coiled coil. 2 disordered regions span residues 1041 to 1102 (SDPD…INNS) and 1114 to 1166 (KSAL…AHAI). A compositionally biased stretch (polar residues) spans 1047–1063 (SPPTISNTTNRLLNTSG). Composition is skewed to low complexity over residues 1064 to 1102 (STDFSTTPLSSSPSTSSTSLSTNNNNNNNGNRNLDINNS) and 1114 to 1159 (KSAL…TTTN). Residues 1189-1219 (LEINNKLHSQLTEELKKKQQQYKQLIFDIID) adopt a coiled-coil conformation.

It localises to the cytoplasm. The protein resides in the contractile vacuole. Functionally, rho GTPase-activating protein involved in the signal transduction pathway. This Dictyostelium discoideum (Social amoeba) protein is GTPase activating protein homolog 3 (mgp3).